A 394-amino-acid chain; its full sequence is 1-deoxy-D-xylulose 5-phosphate reductoisomerase (394 aa).

Residues Thr-10, Gly-11, Ser-12, Ile-13, Gly-38, Arg-39, Asn-40, and Asn-123 each contribute to the NADPH site. Lys-124 is a 1-deoxy-D-xylulose 5-phosphate binding site. Glu-125 contacts NADPH. Asp-149 provides a ligand contact to Mn(2+). Residues Ser-150, Glu-151, Ser-175, and His-198 each coordinate 1-deoxy-D-xylulose 5-phosphate. A Mn(2+)-binding site is contributed by Glu-151. Gly-204 contributes to the NADPH binding site. Ser-211, Asn-216, Lys-217, and Glu-220 together coordinate 1-deoxy-D-xylulose 5-phosphate. A Mn(2+)-binding site is contributed by Glu-220.

The protein belongs to the DXR family. The cofactor is Mg(2+). It depends on Mn(2+) as a cofactor.

The enzyme catalyses 2-C-methyl-D-erythritol 4-phosphate + NADP(+) = 1-deoxy-D-xylulose 5-phosphate + NADPH + H(+). It participates in isoprenoid biosynthesis; isopentenyl diphosphate biosynthesis via DXP pathway; isopentenyl diphosphate from 1-deoxy-D-xylulose 5-phosphate: step 1/6. In terms of biological role, catalyzes the NADPH-dependent rearrangement and reduction of 1-deoxy-D-xylulose-5-phosphate (DXP) to 2-C-methyl-D-erythritol 4-phosphate (MEP). In Cereibacter sphaeroides (strain ATCC 17025 / ATH 2.4.3) (Rhodobacter sphaeroides), this protein is 1-deoxy-D-xylulose 5-phosphate reductoisomerase.